A 445-amino-acid polypeptide reads, in one-letter code: MSDTIFAPATAPGRAAVAVVRVSGPRTQTAVRTLAGDLPEPRRASVRRLFDADGGEIDQALVLWFPGPGSYTGEDAAEFHVHGGTAVTGALVEALAGLGLRLAEPGEFTRRAFENGKLDLAQAEGVADLIDSETEGQRRQALEQLGGRLSQVQARWREALTEALALFEAAVDFPDEEVPADVAARARPVLETLAAEIEAAAADAARGERVREGFRIALVGAPNAGKSTLLNALAGREAAIVTATPGTTRDVIEVPMVLAGYKVLMADTAGLRDTADEIEAEGVRRARAWAEGADLRLWLVDGSSEETPDLPAEIGEGDLCLITKRDLPVGNAGAWAAEVARRIGIPAAEVTARGPGDMAWLKETLSERVVESLGGGEPPAATRLRHRELLAEASERLRHAIGHDEHVELAAEDVRLAARALDRITGRIDPEAVLGRIFATFCIGK.

The (6S)-5-formyl-5,6,7,8-tetrahydrofolate site is built by Arg-21, Glu-78, and Lys-117. A TrmE-type G domain is found at 213 to 370 (GFRIALVGAP…LKETLSERVV (158 aa)). GTP is bound by residues 223–228 (NAGKST), 242–248 (TATPGTT), and 267–270 (DTAG). Mg(2+) is bound by residues Ser-227 and Thr-248. Residue Lys-445 coordinates (6S)-5-formyl-5,6,7,8-tetrahydrofolate.

The protein belongs to the TRAFAC class TrmE-Era-EngA-EngB-Septin-like GTPase superfamily. TrmE GTPase family. Homodimer. Heterotetramer of two MnmE and two MnmG subunits. K(+) serves as cofactor.

Its subcellular location is the cytoplasm. Functionally, exhibits a very high intrinsic GTPase hydrolysis rate. Involved in the addition of a carboxymethylaminomethyl (cmnm) group at the wobble position (U34) of certain tRNAs, forming tRNA-cmnm(5)s(2)U34. This is tRNA modification GTPase MnmE from Phenylobacterium zucineum (strain HLK1).